Here is a 2879-residue protein sequence, read N- to C-terminus: MTYDEGGHRNNEETPQDVNMSSNNEGMSTSSPTGSYGEIIGQATVSVPQEDQEKLTPLNELSGLYAERESYQSPLCPSTTKMISETVRKSSADDGYTSFPIRSTLIDRPVLDKTLRCEFALFPPFCDIQRLSTLSNASWALIAGHLTNSTKVIVGIPAFGESTSVHNIESGTALQPAPIPLLIDWRPEQSVMDYLKHVQSRIADVTTLGGAGSQLLTSGYPVNYNAGHLQTLIVVETNEISPGSINGTREVQLRQYDYKKKYACAALVIEIRLQKTGIVAVASFDTRALGPSLVYNLLKRLEYVMEQLFRVSSDHVLADIDMVTSEDLEQIWQWNDPIPAPVERCMHEMVQEQCRLQPNTLAVDAWDGRLTYRELDQLSNRLACHLVDRGVEPDMFVPLCFHKSMWMPVTAMGVLKAGGAFVLLEPSFPEQRLRAIVEETEASIVLASSTTMALSLRLLDNVIQVDSELFNCLTFSANRLPQLQPSSSAMFGVFTSGSTGKPKGAVLTHANYCSALTYQLDLLGFKKDSRVFDFASYAFDVSVHNIFASLASGACLCIPSEEKRLEDICKSISDMRATIVHLTPSVARLIQPEKVPLLQTVIFTGEPLSVEDVEQWWGKTNIVNEYGPAECSINTINSNPSSPEEATLIGKGVGVAVWIVDPSNHDLLVPIGSVGELLIEGALVGRGYINETEKNAAAFIENPKWLLHGRPGRPGRQGRLYKTGDLVKYGENGNLAFVGRKDTQVKIYGQRVDLREVEHWIQSCGQGAGQVVAEMIAPRADDHDPAPALVAFLRNEHTALDGSLCPNSTEAILRPVPDEVEARLSKHLPNYMVPKVFIVLSKFPMTATGKTDRMQLRKIGSSFSLEQLAEVRAKTWAGPKRQPLSDMERLLCDVWSKVLGLERRSIGPESNFFHLGGDSIAAMKSVGEARKSGIKVAVADVFRHPSLQDLSRQSKYIEDNSLDHIKPFELLGEEFNRLAFLKDASHQYGIDPSAIYDAYPCTPLQEGLMSLTAKRPGDYIEQMILELGEDVKIDNLWAAWKHVACVTPILRTRLVHHNDLGLMQLVIEEDTSWTDATGLDEYLDADRKRSMNLGEPLSRYGLVRDETGEPKWFVWSIHHAIYDGWSVQLILDAAYRAYSGQEVEQGPQFQEFIKYVQQQRHQNQKRVVEYWQKTLEGFEGAQFPPVVPSVQQPVANTAVRHCIPNPPNGRVGVTMSMLIRAAWALVVGRMANSDDVVYGSTLYGRNASVAGLDELAAPTIATVPLRIRLSSKKTVSEYLEAIQREATTMIPFEQTGLQEIAQMSDSCRMACKFQTLLVIQPEEHSQGKGPLGTWQVRSQEQWFSTYPLTLELWLGTDHITASAMFDSRIIESWVVRKMLQRLEGVMYQLNHATSSQLLGDITILTTEDLEQIWEWNKTIPTPVNRCVHEIIHDKVQHRPNAPAICAWDGEITYSELNRLADKLSGRLTELGVGPHLLVPLCFEKSLWTAVAILGVIKSGGGFVLLDASLPEQRLRSIMKQIKGDLVITCPSQQALCSRLGAETITLSWGFFSTLKDYEAGLQIQSYSPSSILYAVFTSGSTGIPKGVLITHANMASALYYQSEVMGLSEDSRLYDFASYSFDVAISNMFTVLAAGGCLCVPSEEHRKNNLEGSIISLRANALDLTPSIAQLLSPARLPNVRSLTLGGEPVLATAVEQWFGKLQIRNAYGPSECTPTCIVNHNPSSPEQATEIGNGVGIVTWVVDPSNHEVLLPPGCTGELLLEGPLVGPGYLDDGEKTAAAFVHDPVWLTKGTHNRSGRHGLLYKTGDLAKYHENGTLSFVRRKDTTQIKLRGQRVELGEVEHILRSHSCVIDAVAASQCDDKLGAWIAGFVTIRADGQKEHQGDEEYEQQQIQSWEDQFDGETYTSIEEIPREAIGRDFIGWTSMYDGSDLDKGEMNEWLNDTINTILDGGPAGHVLEIGCGSGMMLFNLANKGLQSYIGIEPSKRAVDATASIVKSIPHLKERVRIVKGTGEDLQQLGTPISPDLVVINSVIQYFPSQKYLVKLIQDILELRSVQTIFFGDVRSHALHKEFLALRALSIVGETASREEIGQVLSNLHRAEPELLLDPEFFTSLPARLPGHIAHVEILPKKMEATNELSSFRYGAVVHVDLKHGQIRDIDAKSWVSYTSQGLDCKSLLALLKDWPHAADTIAISDIPHSKTVFATKLIDELENGASEARHGRHWAEFIRQDAKQCCALSAIDLVKLAKEAGYRAEVSWARQYSQRGGLDAVFHRFITDNDARRVLFRFPIDHTNRPFHLLSSKPLRRRAEMNIQRELEARLRCQLPSHMIPQTITILDRMPISHNGKVDRQILADSVQRQWTGQERKRWPTTDTGKELQRIWSHVLNISPDSIGLDDGFVHFGGNSLHAMKIVHMARQAGINLKVTDMFRHSETTIGRLLLDCCCDDTPGKSTSADPVHWTYLMAAIDEKDKCLAAIQAGAKPRLVDGDIQADPDELFTVLLTGANGFIGTQILRQLLEHGRVDRVICIVRGESTSVARHRTIEAAQKALWWTEFHQEMLEVWPGDLSAPRLGLDDAKWRLLAEGKAVNIIIHNGASVNFVKGYAALEAVNVNSTVEMMSVVTRNPGMRFIYVSSARSQDPMEEEEEDMARVLTENPNGYNQTKFVAEALVRRAASRSSPRQHQFMVVSPGLVVGTPTEGVANADDWLWRMAAACIRVGVYNVDDSDKWIPLCDVGTIAAVIIHAALGHPSSSTTVTQVRGGLTMGEFWETLATAGYPLTGTRVAECTAAIREDILANREKHPLGVLEDMLQDLDDTTNVQWAASWRKNGLCSPARLKAALCKSAEFLSGVSFLPLPNFVRERLVQETSMSAFTRSGF.

The segment covering 1-12 (MTYDEGGHRNNE) has biased composition (basic and acidic residues). Positions 1-52 (MTYDEGGHRNNEETPQDVNMSSNNEGMSTSSPTGSYGEIIGQATVSVPQEDQ) are disordered. The span at 16-34 (QDVNMSSNNEGMSTSSPTG) shows a compositional bias: polar residues. An adenylation 1 region spans residues 351-747 (QEQCRLQPNT…VGRKDTQVKI (397 aa)). A Carrier 1 domain is found at 882–958 (QPLSDMERLL…DLSRQSKYIE (77 aa)). At Ser-919 the chain carries O-(pantetheine 4'-phosphoryl)serine. A condensation region spans residues 997 to 1410 (DAYPCTPLQE…ITILTTEDLE (414 aa)). The tract at residues 1433–1827 (DKVQHRPNAP…LSFVRRKDTT (395 aa)) is adenylation 2. The methylation (Met) domain stretch occupies residues 1958-2050 (LEIGCGSGMM…KYLVKLIQDI (93 aa)). The Carrier 2 domain maps to 2370-2448 (WPTTDTGKEL…RLLLDCCCDD (79 aa)). Position 2407 is an O-(pantetheine 4'-phosphoryl)serine (Ser-2407). A thiesterase (TE) domain region spans residues 2500–2817 (TVLLTGANGF…LEDMLQDLDD (318 aa)).

Belongs to the NRP synthetase family. Pantetheine 4'-phosphate serves as cofactor.

The enzyme catalyses (S)-1-pyrroline-5-carboxylate + L-arginine + S-adenosyl-L-methionine + 2 ATP = peramine + 2 AMP + S-adenosyl-L-homocysteine + 2 diphosphate + H2O + 2 H(+). It participates in secondary metabolite biosynthesis. Its function is as follows. Nonribosomal peptide synthetase; part of the gene cluster that mediates the biosynthesis of pyrrolopyrazines, secondary metabolites showing insecticidal activity. The single multifunctional NRPS ppzA is responsible for the biosynthesis of peramine. The condensation domain of ppzA is proposed to catalyze formation of a peptide bond between 1-pyrroline-5-carboxylate and arginine. The methylation domain of ppzA would catalyze the N-methylation of the alpha-amino group of arginine. The reductase domain is proposed to be responsible for reduction of the thioester and the cyclization to form an iminium ion resulting in release from the peptide synthetase. Deprotonation of this intermediate and oxidation of the pyrroline ring would give rise to peramine. This final oxidation to give the pyrrole functionality may be spontaneous. In Epichloe species that produce only peramine, the peramine synthetase gene is not localized in a gene cluster, in contrast to Metarhizium species that contain additional pyrrolopyrazine biosynthesis genes. The 2-oxoglutarate-Fe(II) type oxidoreductase ppzC hydroxylates peramine to yield the newly identified compound 8-hydroxyperamine whereas ppzD converts L-proline into trans-4-hydroxy-L-proline, a precursor of peramine biosynthesis. In Metarhizium rileyi (strain RCEF 4871) (Nomuraea rileyi), this protein is Peramine synthetase ppzA.